The sequence spans 569 residues: uncharacterized protein (569 aa).

A helical transmembrane segment spans residues 2–22 (VVIAALLGSLAVLAFLFYLWY).

It is found in the membrane. This is an uncharacterized protein from Mycoplasma pneumoniae (strain ATCC 29342 / M129 / Subtype 1) (Mycoplasmoides pneumoniae).